Consider the following 407-residue polypeptide: MKKLFSVKLSKSKVILVAACLLLAGSGTAYAAHELTKQSVSVSINGKKKHIRTHANTVGDLLETLDIKTRDEDKITPAKQTKITADMDVVYEAAKPVKLTINGEEKTLWSTAKTVGALLDEQDVDVKEQDQIDPAIDTDISKDMKINIEPAFQVTVNDAGKQKKIWTTSTTVADFLKQQKMNIKDEDKIKPALDAKLTKGKADITITRIEKVTDVVEEKIAFDVKKQEDASLEKGKEKVVQKGKEGKLKKHFEVVKENGKEVSRELVKEETAEQSKDKVIAVGTKQSSPKFETVSASGDSKTVVSRSNESTGKVMTVSSTAYTASCSGCSGHTATGVNLKNNPNAKVIAVDPNVIPLGSKVHVEGYGYAIAADTGSAIKGNKIDVFFPEKSSAYRWGNKTVKIKILN.

A signal peptide spans 1 to 31 (MKKLFSVKLSKSKVILVAACLLLAGSGTAYA). One can recognise a G5 domain in the interval 206–286 (ITRIEKVTDV…DKVIAVGTKQ (81 aa)).

In terms of biological role, suggested to be involved in cell wall modification. The protein is Putative cell wall shaping protein YabE (yabE) of Bacillus subtilis (strain 168).